Reading from the N-terminus, the 1224-residue chain is DNA-directed RNA polymerase subunit beta (1224 aa).

The protein belongs to the RNA polymerase beta chain family. The RNAP catalytic core consists of 2 alpha, 1 beta, 1 beta' and 1 omega subunit. When a sigma factor is associated with the core the holoenzyme is formed, which can initiate transcription.

It carries out the reaction RNA(n) + a ribonucleoside 5'-triphosphate = RNA(n+1) + diphosphate. In terms of biological role, DNA-dependent RNA polymerase catalyzes the transcription of DNA into RNA using the four ribonucleoside triphosphates as substrates. This chain is DNA-directed RNA polymerase subunit beta, found in Pelotomaculum thermopropionicum (strain DSM 13744 / JCM 10971 / SI).